A 586-amino-acid chain; its full sequence is MNLFTDFEVRIKNALEQIDIVREKRSELDFGRIGVEPPRDASHGDVATNAAMVLSKPLGMNPRALAEIIIAKLQEDADVADVSAAGPGFINIRLSVGYWQRLLATMISEGEKFGRSTVGAGQKVNVEYVSANPTGPMHVGHCRGAVVGDALANLLGFAGYDVTKEYYINDAGSQIDVLARSVFIRYREALGEQVGEIPAGLYPGDYLVPVGESLAKEFGTKLRGMPEEQWLPIIRERAIDAMMVMIRADLEALNVHHDVFFSERTLHANGAALIRTAINDLTFKGYVYKGALPPPKGQLPEDWEDREQTLFRSTEVGDDIDRPLIKSDGSYTYFAADVAYFKNKFDRGFNEMIYILGADHGGYVKRLEAVARGVSEGKAKLTVLLCQLVKLFRNGEPVKMSKRSGDFVTLREVVDEVGRDSVRFMMLYRKSSEPLDFDFAKVTEQSKDNPVFYVQYAHARCMSIFRQAQEAFPDLDIASLDLAKAVGGVISDPAELQLVAKIAEFPRIIEAAAQAQEPHRIAFYLYDLASSFHGHWNKGKDLPELRFVNDKNRELSIARLGLVHAVASVLKSGLGITGTAAPDEMR.

The short motif at 131-141 (ANPTGPMHVGH) is the 'HIGH' region element.

This sequence belongs to the class-I aminoacyl-tRNA synthetase family. In terms of assembly, monomer.

It is found in the cytoplasm. The catalysed reaction is tRNA(Arg) + L-arginine + ATP = L-arginyl-tRNA(Arg) + AMP + diphosphate. The protein is Arginine--tRNA ligase of Rhizobium rhizogenes (strain K84 / ATCC BAA-868) (Agrobacterium radiobacter).